A 246-amino-acid chain; its full sequence is Probable maleylacetoacetate isomerase 1 (246 aa).

In terms of domain architecture, GST N-terminal spans 32–116 (TKPILYSYWP…YLEETRPQPA (85 aa)). Glutathione is bound by residues 42-47 (SSCSWR), Val-88, 100-101 (DS), Gln-140, and 144-146 (NVS). In terms of domain architecture, GST C-terminal spans 121-241 (DPVKRAKIRE…HPSTQPDCPP (121 aa)).

It belongs to the GST superfamily. Zeta family. Glutathione is required as a cofactor.

It localises to the cytoplasm. It carries out the reaction 4-maleylacetoacetate = 4-fumarylacetoacetate. It catalyses the reaction RX + glutathione = an S-substituted glutathione + a halide anion + H(+). The protein operates within amino-acid degradation; L-phenylalanine degradation; acetoacetate and fumarate from L-phenylalanine: step 5/6. Catalyzes the glutathione dependent oxygenation of dichloroacetic acid to glyoxylic acid in vitro. Possesses low glutathione thioltransferase activity toward 4-hydroxynonenal (4-HNE). Has no glutathione thioltransferase activity with adrenochrome, phenethyl isothiocyanate (PEITC), 5-hydroperoxyeicosatetraenoic acid ((5S)-HpETE), prostaglandin A2 (PGA2) or 2-hydroxyethyldisulfide (HED). The chain is Probable maleylacetoacetate isomerase 1 (GstZ1) from Drosophila melanogaster (Fruit fly).